Consider the following 123-residue polypeptide: Ribosome-binding factor A (123 aa).

The protein belongs to the RbfA family. In terms of assembly, monomer. Binds 30S ribosomal subunits, but not 50S ribosomal subunits or 70S ribosomes.

The protein resides in the cytoplasm. In terms of biological role, one of several proteins that assist in the late maturation steps of the functional core of the 30S ribosomal subunit. Associates with free 30S ribosomal subunits (but not with 30S subunits that are part of 70S ribosomes or polysomes). Required for efficient processing of 16S rRNA. May interact with the 5'-terminal helix region of 16S rRNA. The sequence is that of Ribosome-binding factor A from Desulfatibacillum aliphaticivorans.